We begin with the raw amino-acid sequence, 319 residues long: MKRIGILTSGGDAPGMNAAIRAVTRTALANGIEVCGIRYGYAGLVAGDIFQMTSETVADKISRGGTFLYSARFPEFKEEEVQLKGIEQLKKHGIDALVVIGGDGSYHGALKLTRHGYNAIGLPGSIDNDIPYTDYTIGFDTACNTAMEAIDKIRDTATSHQRVFVVNVMGRDCGDIAMHVGVATGADAIVIPEEPYDIKEIAENLKQGFANGKKHGIVVLAEGVMDAEKFKDELLKYGDFDARANVLGHMQRGGSPTMRDRVVASEMGAYAVKLLLEGKGGLAVGMENNKLTHHDILDLFDAKHHGNYALYSLNKDLAK.

Glycine 11 is a binding site for ATP. ADP is bound at residue 21 to 25 (RAVTR). ATP-binding positions include 72-73 (RF) and 102-105 (GDGS). A Mg(2+)-binding site is contributed by aspartate 103. 125–127 (SID) provides a ligand contact to substrate. The active-site Proton acceptor is the aspartate 127. An ADP-binding site is contributed by arginine 154. Substrate contacts are provided by residues arginine 162 and 169-171 (MGR). ADP is bound by residues 185-187 (GAD) and 213-215 (KKH). Residues glutamate 222, arginine 243, and 249 to 252 (HMQR) each bind substrate.

This sequence belongs to the phosphofructokinase type A (PFKA) family. ATP-dependent PFK group I subfamily. Prokaryotic clade 'B1' sub-subfamily. As to quaternary structure, homotetramer. It depends on Mg(2+) as a cofactor.

It localises to the cytoplasm. The catalysed reaction is beta-D-fructose 6-phosphate + ATP = beta-D-fructose 1,6-bisphosphate + ADP + H(+). It participates in carbohydrate degradation; glycolysis; D-glyceraldehyde 3-phosphate and glycerone phosphate from D-glucose: step 3/4. Its activity is regulated as follows. Allosterically activated by ADP and other diphosphonucleosides, and allosterically inhibited by phosphoenolpyruvate. Catalyzes the phosphorylation of D-fructose 6-phosphate to fructose 1,6-bisphosphate by ATP, the first committing step of glycolysis. The polypeptide is ATP-dependent 6-phosphofructokinase (Lactobacillus johnsonii (strain CNCM I-12250 / La1 / NCC 533)).